Consider the following 270-residue polypeptide: UPF0354 protein BCE_4835 (270 aa).

It belongs to the UPF0354 family.

This chain is UPF0354 protein BCE_4835, found in Bacillus cereus (strain ATCC 10987 / NRS 248).